We begin with the raw amino-acid sequence, 247 residues long: Carboxy-S-adenosyl-L-methionine synthase (247 aa).

Residues Tyr40, Gly65–Ser67, Asp90–Asn91, Asp122–Ile123, Asn137, and Arg204 contribute to the S-adenosyl-L-methionine site.

The protein belongs to the class I-like SAM-binding methyltransferase superfamily. Cx-SAM synthase family. As to quaternary structure, homodimer.

It carries out the reaction prephenate + S-adenosyl-L-methionine = carboxy-S-adenosyl-L-methionine + 3-phenylpyruvate + H2O. Its function is as follows. Catalyzes the conversion of S-adenosyl-L-methionine (SAM) to carboxy-S-adenosyl-L-methionine (Cx-SAM). This is Carboxy-S-adenosyl-L-methionine synthase from Pseudomonas syringae pv. tomato (strain ATCC BAA-871 / DC3000).